The primary structure comprises 109 residues: Ubiquitin-related modifier 1 homolog (109 aa).

G109 bears the 1-thioglycine mark. A Glycyl lysine isopeptide (Gly-Lys) (interchain with K-? in acceptor proteins) cross-link involves residue G109.

The protein belongs to the URM1 family. Post-translationally, C-terminal thiocarboxylation occurs in 2 steps, it is first acyl-adenylated (-COAMP) via the hesA/moeB/thiF part of the MOCS3 homolog, then thiocarboxylated (-COSH) via the rhodanese domain of the MOCS3 homolog.

Its subcellular location is the cytoplasm. Its pathway is tRNA modification; 5-methoxycarbonylmethyl-2-thiouridine-tRNA biosynthesis. Its function is as follows. Acts as a sulfur carrier required for 2-thiolation of mcm(5)S(2)U at tRNA wobble positions of cytosolic tRNA(Lys), tRNA(Glu) and tRNA(Gln). Serves as sulfur donor in tRNA 2-thiolation reaction by being thiocarboxylated (-COSH) at its C-terminus by MOCS3. The sulfur is then transferred to tRNA to form 2-thiolation of mcm(5)S(2)U. Also acts as a ubiquitin-like protein (UBL) that is covalently conjugated via an isopeptide bond to lysine residues of target proteins. The thiocarboxylated form serves as substrate for conjugation and oxidative stress specifically induces the formation of UBL-protein conjugates. The protein is Ubiquitin-related modifier 1 homolog of Bombyx mori (Silk moth).